We begin with the raw amino-acid sequence, 296 residues long: MFKSGFVTIVGRPNVGKSTLLNAIMKEKLSIVSCRPQTTRNNIQTILTEDNYQLVFVDTPGIHKPKHKLGEYMVKSASDAMKDVDLVLFLINPDEKPGRGDLFIIEQLKEVKVPVFLVLNKIDENPQEKVAETLKTYSELMEFEEIIPISALKGKNIDLLKELMFKYIPEGPQYYPEDMIIDQNERFIVAEIVREKALRLLSEEVPHGIAVEILQMKRNEKGTYHIEGNILCEKNSHKPIIIGKGGSKLKKISQYARQDIEAFLQSKVYIRLWVKVKEEWRDNQSLLKELGYKNMK.

Residues 3 to 170 enclose the Era-type G domain; that stretch reads KSGFVTIVGR…KELMFKYIPE (168 aa). The tract at residues 11–18 is G1; sequence GRPNVGKS. Position 11–18 (11–18) interacts with GTP; the sequence is GRPNVGKS. The G2 stretch occupies residues 37-41; sequence QTTRN. The tract at residues 58–61 is G3; that stretch reads DTPG. GTP-binding positions include 58–62 and 120–123; these read DTPGI and NKID. Residues 120–123 form a G4 region; that stretch reads NKID. The segment at 149 to 151 is G5; the sequence is ISA. Positions 201 to 278 constitute a KH type-2 domain; sequence LSEEVPHGIA…YIRLWVKVKE (78 aa).

Belongs to the TRAFAC class TrmE-Era-EngA-EngB-Septin-like GTPase superfamily. Era GTPase family. In terms of assembly, monomer.

Its subcellular location is the cytoplasm. The protein resides in the cell membrane. Functionally, an essential GTPase that binds both GDP and GTP, with rapid nucleotide exchange. Plays a role in 16S rRNA processing and 30S ribosomal subunit biogenesis and possibly also in cell cycle regulation and energy metabolism. This is GTPase Era from Clostridium botulinum (strain Loch Maree / Type A3).